The sequence spans 731 residues: MSRSEKLTGEHLAPEPAEMARLVAGTHHNPHGILGAHEYDDHTVIRAFRPHAVEVVALVGKDRFSLQHLDSGLFAVALPFVDLIDYRLQVTYEGCEPHTVADAYRFLPTLGEVDLHLFAEGRHERLWEVLGAHPRSFTTADGVVSGVSFAVWAPNAKGVSLIGEFNGWNGHEAPMRVLGPSGVWELFWPDFPCDGLYKFRVHGADGVVTDRADPFAFGTEVPPQTASRVTSSDYTWGDDDWMAGRALRNPVNEAMSTYEVHLGSWRPGLSYRQLARELTDYIVDQGFTHVELLPVAEHPFAGSWGYQVTSYYAPTSRFGTPDDFRALVDALHQAGIGVIVDWVPAHFPKDAWALGRFDGTPLYEHSDPKRGEQLDWGTYVFDFGRPEVRNFLVANALYWLQEFHIDGLRVDAVASMLYLDYSRPEGGWTPNVHGGRENLEAVQFLQEMNATAHKVAPGIVTIAEESTPWSGVTRPTNIGGLGFSMKWNMGWMHDTLDYVSRDPVYRSYHHHEMTFSMLYAFSENYVLPLSHDEVVHGKGTLWGRMPGNNHVKAAGLRSLLAYQWAHPGKQLLFMGQEFGQRAEWSEQRGLDWFQLDENGFSNGIQRLVRDINDIYRCHPALWSLDTTPEGYSWIDANDSANNVLSFMRYGSDGSVLACVFNFAGAEHRDYRLGLPRAGRWREVLNTDATIYHGSGIGNLGGVDATDDPWHGRPASAVLVLPPTSALWLTPA.

Asp411 acts as the Nucleophile in catalysis. Residue Glu464 is the Proton donor of the active site.

The protein belongs to the glycosyl hydrolase 13 family. GlgB subfamily. In terms of assembly, monomer.

It carries out the reaction Transfers a segment of a (1-&gt;4)-alpha-D-glucan chain to a primary hydroxy group in a similar glucan chain.. It participates in glycan biosynthesis; glycogen biosynthesis. Catalyzes the formation of the alpha-1,6-glucosidic linkages in glycogen by scission of a 1,4-alpha-linked oligosaccharide from growing alpha-1,4-glucan chains and the subsequent attachment of the oligosaccharide to the alpha-1,6 position. The protein is 1,4-alpha-glucan branching enzyme GlgB of Mycobacterium tuberculosis (strain ATCC 25177 / H37Ra).